The chain runs to 142 residues: Immunoglobulin iota chain (142 aa).

The first 19 residues, 1-19 (MAWTSVLLMLLAYLTGCGP), serve as a signal peptide directing secretion. The interval 20–41 (QPMVHQPPLASSSLGATIRLSC) is framework-1. Cysteines 41 and 115 form a disulfide. The complementarity-determining-1 stretch occupies residues 42 to 56 (TLSNDHNIGIYSIYW). Residues 57 to 70 (YQQRPGHPPRFLLR) form a framework-2 region. The tract at residues 71–81 (YFSHSDKHQGP) is complementarity-determining-2. A framework-3 region spans residues 82 to 115 (DIPPRFSGSKDTTRNLGYLSISELQPEDEAVYYC).

The protein belongs to the immunoglobulin superfamily. As to quaternary structure, interacts with IGLL1. Interacts with SYNV1/HRD1 (via N-terminus); this interaction leads to increased VPREB1A ubiquitination and degradation in pre-B cells, possibly through a lysosomal, not proteasomal, pathway. As to expression, only expressed by pre-B-cells.

It is found in the endoplasmic reticulum. Associates with the Ig-mu chain to form a molecular complex that is expressed on the surface of pre-B-cells. This complex presumably regulates Ig gene rearrangements in the early steps of B-cell differentiation. This is Immunoglobulin iota chain from Mus musculus (Mouse).